Reading from the N-terminus, the 718-residue chain is Gephyrin (718 aa).

Polar residues predominate over residues 1–19 (MSNTLTTERNITNSPTAAQ). The disordered stretch occupies residues 1 to 26 (MSNTLTTERNITNSPTAAQLNEKESG). The interval 31-176 (EWIVGVLTTS…LPGSVKAIRE (146 aa)) is MPT Mo-transferase. Low complexity predominate over residues 222-244 (NQNNQNNNNNNNNNNNNNNNNNS). 2 disordered regions span residues 222–266 (NQNN…SSYN) and 344–364 (TGEN…NDDD). Basic residues predominate over residues 245–254 (HNHHHHHHHS). The interval 260–718 (KRGSSYNMTP…KAILIGPINN (459 aa)) is MPT adenylyltransferase.

In the N-terminal section; belongs to the MoaB/Mog family. The protein in the C-terminal section; belongs to the MoeA family. Homotrimer, homodimer and homooligomer. Mg(2+) serves as cofactor.

It localises to the cell membrane. The protein localises to the cytoplasm. The protein resides in the cytosol. It is found in the cytoskeleton. It carries out the reaction molybdopterin + ATP + H(+) = adenylyl-molybdopterin + diphosphate. It catalyses the reaction adenylyl-molybdopterin + molybdate = Mo-molybdopterin + AMP + H(+). It functions in the pathway cofactor biosynthesis; molybdopterin biosynthesis. Functionally, microtubule-associated protein involved in membrane protein-cytoskeleton interactions. In terms of biological role, also has a catalytic activity and catalyzes two steps in the biosynthesis of the molybdenum cofactor. In the first step, molybdopterin is adenylated. Subsequently, molybdate is inserted into adenylated molybdopterin and AMP is released. This is Gephyrin (gphn) from Dictyostelium discoideum (Social amoeba).